The chain runs to 178 residues: Large ribosomal subunit protein uL6 (178 aa).

Belongs to the universal ribosomal protein uL6 family. Part of the 50S ribosomal subunit.

Functionally, this protein binds to the 23S rRNA, and is important in its secondary structure. It is located near the subunit interface in the base of the L7/L12 stalk, and near the tRNA binding site of the peptidyltransferase center. The sequence is that of Large ribosomal subunit protein uL6 from Helicobacter pylori (strain HPAG1).